Here is a 1399-residue protein sequence, read N- to C-terminus: Meiosis-specific protein ASY2 (1399 aa).

The HORMA domain maps to 10-248 (QQSLILTTEL…SQHHVLTVKV (239 aa)). Over residues 257–266 (PCEDENDNMQ) the composition is skewed to acidic residues. Disordered regions lie at residues 257-281 (PCED…HDDQ), 487-525 (SKPK…SSEP), 617-656 (RLTG…AAPE), 940-974 (PPPP…VDQV), and 1045-1090 (DQDK…AAPK). Positions 267–281 (DDERSKGPDSLHDDQ) are enriched in basic and acidic residues. Positions 509-523 (SAPPSSEPKSAPPSS) are enriched in pro residues. Positions 617–631 (RLTGNPSNEAQSSRS) are enriched in polar residues. Positions 1205–1246 (MASLRDAAEIHKAEMSSLNDEVKRLNSREADLQKEFSDLQVA) form a coiled coil.

It localises to the chromosome. The protein resides in the nucleus. In terms of biological role, required for normal meiosis. This Arabidopsis thaliana (Mouse-ear cress) protein is Meiosis-specific protein ASY2.